Here is a 548-residue protein sequence, read N- to C-terminus: Chaperonin GroEL (548 aa).

Residues 30–33, Lys-51, 87–91, Gly-415, 479–481, and Asp-495 each bind ATP; these read TLGP, DGTTT, and NAA.

Belongs to the chaperonin (HSP60) family. In terms of assembly, forms a cylinder of 14 subunits composed of two heptameric rings stacked back-to-back. Interacts with the co-chaperonin GroES.

The protein resides in the cytoplasm. The enzyme catalyses ATP + H2O + a folded polypeptide = ADP + phosphate + an unfolded polypeptide.. Its function is as follows. Together with its co-chaperonin GroES, plays an essential role in assisting protein folding. The GroEL-GroES system forms a nano-cage that allows encapsulation of the non-native substrate proteins and provides a physical environment optimized to promote and accelerate protein folding. The polypeptide is Chaperonin GroEL (Aliivibrio fischeri (strain MJ11) (Vibrio fischeri)).